Consider the following 366-residue polypeptide: Carbamoyl phosphate synthase small chain (366 aa).

The CPSase stretch occupies residues 1–171 (MLEKRYLVLE…KTPYVSTGSD (171 aa)). The L-glutamine site is built by serine 47, glycine 221, and glycine 223. The Glutamine amidotransferase type-1 domain occupies 173 to 360 (SVVLLDFGKK…IAMMKDFKEK (188 aa)). Cysteine 248 (nucleophile) is an active-site residue. L-glutamine is bound by residues leucine 249, glutamine 252, asparagine 290, glycine 292, and tyrosine 293. Catalysis depends on residues histidine 333 and glutamate 335.

It belongs to the CarA family. In terms of assembly, composed of two chains; the small (or glutamine) chain promotes the hydrolysis of glutamine to ammonia, which is used by the large (or ammonia) chain to synthesize carbamoyl phosphate. Tetramer of heterodimers (alpha,beta)4.

It catalyses the reaction hydrogencarbonate + L-glutamine + 2 ATP + H2O = carbamoyl phosphate + L-glutamate + 2 ADP + phosphate + 2 H(+). The enzyme catalyses L-glutamine + H2O = L-glutamate + NH4(+). It participates in amino-acid biosynthesis; L-arginine biosynthesis; carbamoyl phosphate from bicarbonate: step 1/1. It functions in the pathway pyrimidine metabolism; UMP biosynthesis via de novo pathway; (S)-dihydroorotate from bicarbonate: step 1/3. Functionally, small subunit of the glutamine-dependent carbamoyl phosphate synthetase (CPSase). CPSase catalyzes the formation of carbamoyl phosphate from the ammonia moiety of glutamine, carbonate, and phosphate donated by ATP, constituting the first step of 2 biosynthetic pathways, one leading to arginine and/or urea and the other to pyrimidine nucleotides. The small subunit (glutamine amidotransferase) binds and cleaves glutamine to supply the large subunit with the substrate ammonia. The polypeptide is Carbamoyl phosphate synthase small chain (Staphylococcus epidermidis (strain ATCC 12228 / FDA PCI 1200)).